The chain runs to 219 residues: Transcription factor MYB23 (219 aa).

HTH myb-type domains follow at residues 9-61 (EHEY…MNYL) and 62-116 (SPNV…SKKL). 2 DNA-binding regions (H-T-H motif) span residues 37 to 61 (WNRI…MNYL) and 89 to 112 (WSLI…NTHL).

Interacts with BHLH2/EGL3/MYC146, BHLH12/MYC1 and GL3. As to expression, expressed in roots, seed coats, leaves, stems and flowers. Detected specifically in trichomes, and in the cell division and differentiation zone of the root.

Its subcellular location is the nucleus. Functionally, transcription activator, when associated with BHLH2/EGL3/MYC146 or BHLH12/MYC1. Regulates the epidermal cell fate specification. Mediates the formation of columellae and accumulation of mucilages on seed coats. Controls the elongation of epidermal cells positively in roots but negatively in stems, leading to the promotion of primary roots elongation and repression of leaves and stems elongation, respectively. Ovoids ectopic root-hair formation, probably by inducing GL2 in roots. Controls trichome initiation and branching. The polypeptide is Transcription factor MYB23 (MYB23) (Arabidopsis thaliana (Mouse-ear cress)).